The chain runs to 230 residues: Phosphoribosylformylglycinamidine synthase subunit PurQ (230 aa).

A Glutamine amidotransferase type-1 domain is found at 2–230 (KIAVTKFLGT…KGMIDYAKRI (229 aa)). The active-site Nucleophile is Cys85. Residues His202 and Glu204 contribute to the active site.

As to quaternary structure, part of the FGAM synthase complex composed of 1 PurL, 1 PurQ and 2 PurS subunits.

The protein resides in the cytoplasm. It carries out the reaction N(2)-formyl-N(1)-(5-phospho-beta-D-ribosyl)glycinamide + L-glutamine + ATP + H2O = 2-formamido-N(1)-(5-O-phospho-beta-D-ribosyl)acetamidine + L-glutamate + ADP + phosphate + H(+). The enzyme catalyses L-glutamine + H2O = L-glutamate + NH4(+). It functions in the pathway purine metabolism; IMP biosynthesis via de novo pathway; 5-amino-1-(5-phospho-D-ribosyl)imidazole from N(2)-formyl-N(1)-(5-phospho-D-ribosyl)glycinamide: step 1/2. Its function is as follows. Part of the phosphoribosylformylglycinamidine synthase complex involved in the purines biosynthetic pathway. Catalyzes the ATP-dependent conversion of formylglycinamide ribonucleotide (FGAR) and glutamine to yield formylglycinamidine ribonucleotide (FGAM) and glutamate. The FGAM synthase complex is composed of three subunits. PurQ produces an ammonia molecule by converting glutamine to glutamate. PurL transfers the ammonia molecule to FGAR to form FGAM in an ATP-dependent manner. PurS interacts with PurQ and PurL and is thought to assist in the transfer of the ammonia molecule from PurQ to PurL. This Methanocaldococcus jannaschii (strain ATCC 43067 / DSM 2661 / JAL-1 / JCM 10045 / NBRC 100440) (Methanococcus jannaschii) protein is Phosphoribosylformylglycinamidine synthase subunit PurQ.